Here is a 342-residue protein sequence, read N- to C-terminus: Flagellar P-ring protein (342 aa).

The first 19 residues, M1–A19, serve as a signal peptide directing secretion.

This sequence belongs to the FlgI family. The basal body constitutes a major portion of the flagellar organelle and consists of four rings (L,P,S, and M) mounted on a central rod.

The protein resides in the periplasm. The protein localises to the bacterial flagellum basal body. Functionally, assembles around the rod to form the L-ring and probably protects the motor/basal body from shearing forces during rotation. This chain is Flagellar P-ring protein, found in Helicobacter pylori (strain P12).